A 500-amino-acid chain; its full sequence is NAD(P)H-quinone oxidoreductase chain 4, chloroplastic (500 aa).

Helical transmembrane passes span 4–24 (FPWLTIIVVFPISAGSLMLFL), 35–55 (YTICICILELLITTYAFCYNF), 87–107 (IGTILLTGFITTLATLAAFPV), 113–130 (LFHFLMLAMYSGQIGSFS), 134–154 (LLLFFIMWELELIPVYLLLSM), 167–187 (FILYTAGSSIFLLIGVLGISL), 211–231 (IILYIGFLIAFAVKSPLIPLH), 242–262 (HYSTCMLLAGILLKMGAYGLV), 272–292 (AHSLFSPWLMVVGTIQIIYAA), 305–325 (IAYSSVSHMGFIIIGIASITD), 330–350 (GAILQIISHGFIGAALFFLAG), 386–406 (LALPGMSGFVAEFIVFFGIIT), 416–436 (IFIIVVMAIGMILTPIYLLSM), and 462–482 (LFLSISSLLPIIGMGIYPDFV).

This sequence belongs to the complex I subunit 4 family.

It localises to the plastid. The protein localises to the chloroplast thylakoid membrane. The catalysed reaction is a plastoquinone + NADH + (n+1) H(+)(in) = a plastoquinol + NAD(+) + n H(+)(out). It carries out the reaction a plastoquinone + NADPH + (n+1) H(+)(in) = a plastoquinol + NADP(+) + n H(+)(out). In Aethionema cordifolium (Lebanon stonecress), this protein is NAD(P)H-quinone oxidoreductase chain 4, chloroplastic.